The chain runs to 88 residues: Large ribosomal subunit protein bL27 (88 aa).

The disordered stretch occupies residues 1–24 (MAHKKGTGSTRNGRDSNAKRLGVK).

It belongs to the bacterial ribosomal protein bL27 family.

The chain is Large ribosomal subunit protein bL27 from Synechococcus sp. (strain CC9605).